A 124-amino-acid chain; its full sequence is Small ribosomal subunit protein uS12 (124 aa).

Residues 1-25 (MPTINQLIRKPRKSQKEKTASPALQ) are disordered. A 3-methylthioaspartic acid modification is found at Asp-89.

The protein belongs to the universal ribosomal protein uS12 family. As to quaternary structure, part of the 30S ribosomal subunit. Contacts proteins S8 and S17. May interact with IF1 in the 30S initiation complex.

With S4 and S5 plays an important role in translational accuracy. Functionally, interacts with and stabilizes bases of the 16S rRNA that are involved in tRNA selection in the A site and with the mRNA backbone. Located at the interface of the 30S and 50S subunits, it traverses the body of the 30S subunit contacting proteins on the other side and probably holding the rRNA structure together. The combined cluster of proteins S8, S12 and S17 appears to hold together the shoulder and platform of the 30S subunit. The sequence is that of Small ribosomal subunit protein uS12 from Borrelia duttonii (strain Ly).